We begin with the raw amino-acid sequence, 333 residues long: L-asparagine oxygenase (333 aa).

Residues glutamate 125 and asparagine 146 each coordinate L-asparagine. Histidine 155 and glutamate 157 together coordinate Fe cation. L-asparagine-binding residues include glutamate 157 and asparagine 158. Fe cation is bound at residue histidine 287. 2-oxoglutarate is bound at residue arginine 301. Arginine 305 provides a ligand contact to L-asparagine.

The protein belongs to the clavaminate synthase family. Fe(2+) serves as cofactor.

It catalyses the reaction L-asparagine + 2-oxoglutarate + O2 = (2S,3S)-3-hydroxyasparagine + succinate + CO2. The protein operates within antibiotic biosynthesis; calcium-dependent antibiotic biosynthesis. Catalyzes the 3-hydroxylation of L-asparagine to (2S,3S)-3-hydroxyasparagine. The 3-hydroxylated asparagine produced is incorporated at position 9 during the biosynthesis of the non-ribosomally synthesized calcium-dependent antibiotic (CDA), a 11-residue acidic lipopeptide lactone. Is able to hydroxylate only free L-asparagine, since it hydroxylates neither a CDA analog with unmodified Asn at position 9 nor a peptidyl-carrier-protein (PCP)-bound asparagine. Is not active toward D-asparagine. The protein is L-asparagine oxygenase (asnO) of Streptomyces coelicolor (strain ATCC BAA-471 / A3(2) / M145).